A 366-amino-acid polypeptide reads, in one-letter code: Ribosomal RNA large subunit methyltransferase M (366 aa).

Residues Ser187, 220 to 223 (SPGG), Asp239, Asp259, and Asp276 each bind S-adenosyl-L-methionine. The active-site Proton acceptor is Lys305.

It belongs to the class I-like SAM-binding methyltransferase superfamily. RNA methyltransferase RlmE family. RlmM subfamily. Monomer.

The protein localises to the cytoplasm. It carries out the reaction cytidine(2498) in 23S rRNA + S-adenosyl-L-methionine = 2'-O-methylcytidine(2498) in 23S rRNA + S-adenosyl-L-homocysteine + H(+). In terms of biological role, catalyzes the 2'-O-methylation at nucleotide C2498 in 23S rRNA. In Tolumonas auensis (strain DSM 9187 / NBRC 110442 / TA 4), this protein is Ribosomal RNA large subunit methyltransferase M.